A 201-amino-acid chain; its full sequence is Guanylate kinase (201 aa).

A Guanylate kinase-like domain is found at S2–Q180. A9–T16 contributes to the ATP binding site.

It belongs to the guanylate kinase family.

The protein resides in the cytoplasm. It carries out the reaction GMP + ATP = GDP + ADP. Functionally, essential for recycling GMP and indirectly, cGMP. The protein is Guanylate kinase of Nitrosomonas europaea (strain ATCC 19718 / CIP 103999 / KCTC 2705 / NBRC 14298).